A 169-amino-acid polypeptide reads, in one-letter code: Large ribosomal subunit protein uL5 (169 aa).

Belongs to the universal ribosomal protein uL5 family. In terms of assembly, part of the 50S ribosomal subunit; contacts the 5S rRNA and probably tRNA. Forms a bridge to the 30S subunit in the 70S ribosome.

In terms of biological role, this is one of the proteins that bind and probably mediate the attachment of the 5S RNA into the large ribosomal subunit, where it forms part of the central protuberance. In the 70S ribosome it contacts protein S13 of the 30S subunit (bridge B1b), connecting the 2 subunits; this bridge is implicated in subunit movement. May contact the P site tRNA; the 5S rRNA and some of its associated proteins might help stabilize positioning of ribosome-bound tRNAs. The protein is Large ribosomal subunit protein uL5 of Cenarchaeum symbiosum (strain A).